The primary structure comprises 414 residues: 2,3-diketo-5-methylthiopentyl-1-phosphate enolase (414 aa).

The active-site Proton acceptor is the Lys99. Substrate is bound by residues Lys148, 174–177 (KDDE), His265, Gly338, and 360–361 (GG). Residues Lys174, Asp176, and Glu177 each contribute to the Mg(2+) site. N6-carboxylysine is present on Lys174.

Belongs to the RuBisCO large chain family. Type IV subfamily. In terms of assembly, homodimer. Requires Mg(2+) as cofactor.

The catalysed reaction is 5-methylsulfanyl-2,3-dioxopentyl phosphate = 2-hydroxy-5-methylsulfanyl-3-oxopent-1-enyl phosphate. It functions in the pathway amino-acid biosynthesis; L-methionine biosynthesis via salvage pathway; L-methionine from S-methyl-5-thio-alpha-D-ribose 1-phosphate: step 3/6. Its function is as follows. Catalyzes the enolization of 2,3-diketo-5-methylthiopentyl-1-phosphate (DK-MTP-1-P) into 2-hydroxy-3-keto-5-methylthiopentenyl-1-phosphate (HK-MTPenyl-1-P). In Bacillus anthracis (strain CDC 684 / NRRL 3495), this protein is 2,3-diketo-5-methylthiopentyl-1-phosphate enolase.